The sequence spans 849 residues: Probable ATP-dependent RNA helicase ddx20 (849 aa).

The tract at residues Phe-9 to Lys-39 is disordered. The Q motif signature appears at Ile-55 to Leu-83. Residues Arg-77, Gln-82, Ala-99 to Thr-106, and Gly-102 to Ile-107 contribute to the ATP site. The 234-residue stretch at Ile-86 to Val-319 folds into the Helicase ATP-binding domain. The short motif at Asp-255 to Asp-258 is the DEAD box element. The Helicase C-terminal domain occupies Lys-355–Asn-499. Disordered stretches follow at residues Gln-480–Glu-504, Ile-572–Asn-644, Ser-667–Tyr-737, and Asn-761–Tyr-817. Composition is skewed to acidic residues over residues Asn-583–Tyr-595, Glu-604–Tyr-615, and Glu-624–Asn-644. Composition is skewed to low complexity over residues Ser-667–Tyr-687 and Lys-696–Asn-720.

It belongs to the DEAD box helicase family. DDX20 subfamily. As to quaternary structure, part of the core SMN complex.

The protein resides in the cytoplasm. It is found in the nucleus. The catalysed reaction is ATP + H2O = ADP + phosphate + H(+). Functionally, the SMN complex catalyzes the assembly of small nuclear ribonucleoproteins (snRNPs), the building blocks of the spliceosome, and thereby plays an important role in the splicing of cellular pre-mRNAs. Most spliceosomal snRNPs contain a common set of Sm proteins SNRPB, SNRPD1, SNRPD2, SNRPD3, SNRPE, SNRPF and SNRPG that assemble in a heptameric protein ring on the Sm site of the small nuclear RNA to form the core snRNP (Sm core). In the cytosol, the Sm proteins SNRPD1, SNRPD2, SNRPE, SNRPF and SNRPG are trapped in an inactive 6S pICln-Sm complex by the chaperone CLNS1A that controls the assembly of the core snRNP. To assemble core snRNPs, the SMN complex accepts the trapped 5Sm proteins from CLNS1A forming an intermediate. Binding of snRNA inside 5Sm triggers eviction of the SMN complex, thereby allowing binding of SNRPD3 and SNRPB to complete assembly of the core snRNP. May also play a role in the metabolism of small nucleolar ribonucleoprotein (snoRNPs). In Dictyostelium discoideum (Social amoeba), this protein is Probable ATP-dependent RNA helicase ddx20 (ddx20).